We begin with the raw amino-acid sequence, 428 residues long: Enolase (428 aa).

Gln-162 contacts (2R)-2-phosphoglycerate. The active-site Proton donor is the Glu-204. Mg(2+)-binding residues include Asp-241, Glu-282, and Asp-309. (2R)-2-phosphoglycerate-binding residues include Lys-334, Arg-363, Ser-364, and Lys-385. Lys-334 serves as the catalytic Proton acceptor.

It belongs to the enolase family. Mg(2+) is required as a cofactor.

The protein localises to the cytoplasm. It localises to the secreted. The protein resides in the cell surface. The catalysed reaction is (2R)-2-phosphoglycerate = phosphoenolpyruvate + H2O. Its pathway is carbohydrate degradation; glycolysis; pyruvate from D-glyceraldehyde 3-phosphate: step 4/5. Its function is as follows. Catalyzes the reversible conversion of 2-phosphoglycerate (2-PG) into phosphoenolpyruvate (PEP). It is essential for the degradation of carbohydrates via glycolysis. This is Enolase from Mycobacterium marinum (strain ATCC BAA-535 / M).